Consider the following 484-residue polypeptide: MGIFDVISGLFKKKPKIAYAKSQSVDLIELKRNPYYIVASVELGNTTTKSIITATNMDTGKTYIVSKHVKMTRDVRKPKKGEEVFGETLWGVELTREAVADMVKEVLLESLKKAGLTVDDLHFVVRSTGVTAGFASPEEVGEMIIALAQGCMKAGVPPAKMTPAMTKEQIPKPFDKYSFLDKIIFDGAVTGVLPPTGKEVVANEMEGELVTAGIKVGSKWTDVDFRNPCMSIDFGTTLAGRITNDTLPYAKVIGNLCGLAGAIADAIARGSGKIDEKTGAALDLANIKGKPNEELAKEYAEEMHKYIIIKEVPKDVDRFGTVPVDPKSAEKAGTTLIGCDVGKNGSDLIKLEELGRELVEKSDIPTLMCCLDYVMSEVVRRLVELAYKKGLISEKSAVGITGRAGITGRKPELIIEKLKTLEIWDKVEENVVFVEDGLALGASVMARCMNCLGTPQVPIGGVRGGGCILGLRRKWQKERGMIRD.

The protein to M.thermoautotrophicum MTH1153.

This is an uncharacterized protein from Methanocaldococcus jannaschii (strain ATCC 43067 / DSM 2661 / JAL-1 / JCM 10045 / NBRC 100440) (Methanococcus jannaschii).